The chain runs to 144 residues: TSC22 domain family protein 1 (144 aa).

Residues 77-98 (LKEQIKELIEKNSQLEQENNLL) are leucine-zipper. The disordered stretch occupies residues 109-144 (QFQAQLQTGSPPATTQPQGSTQPPAQPASQGSGPTA).

The protein belongs to the TSC-22/Dip/Bun family. In terms of assembly, forms homodimers. Forms a heterodimer with TSC22D4/THG1. Interacts with histone H1-2. Interacts with GNL3.

The protein localises to the cytoplasm. It localises to the nucleus. Its subcellular location is the mitochondrion. In terms of biological role, transcriptional repressor. Plays a role in the repression of hematopoietic precursor cell growth. Promotes IL2 deprivation-induced apoptosis in T-lymphocytes, via repression of TSC22D3/GILZ transcription and activation of the caspase cascade. Positively regulates cell death in response to TGFB3 during mammary gland involution. This Bathyergus suillus (Cape dune mole rat) protein is TSC22 domain family protein 1.